The primary structure comprises 140 residues: ATP synthase epsilon chain (140 aa).

It belongs to the ATPase epsilon chain family. F-type ATPases have 2 components, CF(1) - the catalytic core - and CF(0) - the membrane proton channel. CF(1) has five subunits: alpha(3), beta(3), gamma(1), delta(1), epsilon(1). CF(0) has three main subunits: a, b and c.

It is found in the cell inner membrane. In terms of biological role, produces ATP from ADP in the presence of a proton gradient across the membrane. In Marinobacter nauticus (strain ATCC 700491 / DSM 11845 / VT8) (Marinobacter aquaeolei), this protein is ATP synthase epsilon chain.